Reading from the N-terminus, the 65-residue chain is Large ribosomal subunit protein bL35 (65 aa).

This sequence belongs to the bacterial ribosomal protein bL35 family.

The protein is Large ribosomal subunit protein bL35 of Thermoanaerobacter pseudethanolicus (strain ATCC 33223 / 39E) (Clostridium thermohydrosulfuricum).